A 1163-amino-acid polypeptide reads, in one-letter code: NACHT, LRR and PYD domains-containing protein 5 (1163 aa).

Basic and acidic residues-rich tracts occupy residues 1–42, 56–94, and 108–127; these read MGPP…KDQG, PEKE…KDQG, and PEKD…EQKS. Residues 1–201 are disordered; that stretch reads MGPPEKESKA…TEADKDNGGD (201 aa). A compositionally biased stretch (polar residues) spans 128–137; sequence ESTMSPSENV. A compositionally biased stretch (basic and acidic residues) spans 153–173; sequence ASERKMTSPENDSKSIQKDQG. Residues 243–565 form the NACHT domain; that stretch reads HTIILHGRPG…AALYYVLEGL (323 aa). ATP is bound at residue 249–256; the sequence is GRPGVGKS. LRR repeat units lie at residues 801-822, 830-851, 858-878, 887-906, 915-935, 944-964, 972-993, 1001-1022, 1029-1050, 1058-1079, and 1086-1107; these read NLKY…LACE, SVET…MIST, RLKC…ISLG, LLQK…CHLL, NLTH…QQLC, ALQR…GFLA, KLTH…LLCE, YLQE…DLAC, HLKS…TLCE, SLRR…ALSL, and HLNS…KLCS.

It belongs to the NLRP family. As to quaternary structure, component of the subcortical maternal complex (SCMC), at least composed of NLRP5, KHDC3, OOEP, and TLE6. Within the complex, interacts with OOEP, KHDC3 and TLE6. The SCMC may facilitate translocation of its components between the nuclear and cytoplasmic compartments. As part of the SCMC interacts with the SCMC-associated protein ZBED3. As part of the SCMC interacts with the SCMC-associated protein CFL1/Cofilin-1. Interacts with PRKCE. Interacts with TUBB3 at cytoskeleton microtubules. Phosphorylated by PRKCE.

The protein resides in the cytoplasm. It localises to the cytoplasmic vesicle. It is found in the secretory vesicle. The protein localises to the cortical granule. Its subcellular location is the mitochondrion. The protein resides in the nucleus. It localises to the nucleolus. It is found in the golgi apparatus. In terms of biological role, component of the subcortical maternal complex (SCMC), a multiprotein complex that plays a key role in early embryonic development. The SCMC complex is a structural constituent of cytoplasmic lattices, which consist in fibrous structures found in the cytoplasm of oocytes and preimplantation embryos. They are required to store maternal proteins critical for embryonic development, such as proteins that control epigenetic reprogramming of the preimplantation embryo, and prevent their degradation or activation. Required for the localization of cortical granules to the cortex of oocytes, via association with the cortical actin scaffold. Required for cortical actin clearance prior to oocyte exocytosis and prevention of polyspermy. Involved in regulating post-fertilization Ca(2+) release and endoplasmic reticulum storage (ER) storage via regulation of cellular localization. May be involved in the localization of mitochondria to the cytoplasm and perinuclear region in oocytes and early stage embryos, independent of its role in CPL formation. The sequence is that of NACHT, LRR and PYD domains-containing protein 5 from Mus musculus (Mouse).